A 271-amino-acid chain; its full sequence is NADPH-dependent 7-cyano-7-deazaguanine reductase (271 aa).

81–83 serves as a coordination point for substrate; it reads IES. Residue 83–84 participates in NADPH binding; sequence SK. Residue C177 is the Thioimide intermediate of the active site. The active-site Proton donor is D184. Residue 216 to 217 coordinates substrate; the sequence is HE. 245 to 246 serves as a coordination point for NADPH; that stretch reads RG.

It belongs to the GTP cyclohydrolase I family. QueF type 2 subfamily. In terms of assembly, homodimer.

Its subcellular location is the cytoplasm. The catalysed reaction is 7-aminomethyl-7-carbaguanine + 2 NADP(+) = 7-cyano-7-deazaguanine + 2 NADPH + 3 H(+). It participates in tRNA modification; tRNA-queuosine biosynthesis. Catalyzes the NADPH-dependent reduction of 7-cyano-7-deazaguanine (preQ0) to 7-aminomethyl-7-deazaguanine (preQ1). The chain is NADPH-dependent 7-cyano-7-deazaguanine reductase from Xanthomonas oryzae pv. oryzae (strain MAFF 311018).